Consider the following 331-residue polypeptide: Transmembrane protein 59-like (331 aa).

The signal sequence occupies residues 1–21 (MAAVALPLLLLLASPATPTPA). The interval 15 to 62 (PATPTPARDPFSPQLGDTQRCQQRCRQRHPGLPPAQPEPEGPSESPNN) is disordered. The span at 45 to 54 (GLPPAQPEPE) shows a compositional bias: pro residues. Residue Asn-90 is glycosylated (N-linked (GlcNAc...) asparagine). A helical transmembrane segment spans residues 258–278 (VLFCCLFLSVLIILWLSCCTL). The Microbody targeting signal signature appears at 329–331 (TTL).

It belongs to the TMEM59 family.

Its subcellular location is the golgi apparatus membrane. In terms of biological role, modulates the O-glycosylation and complex N-glycosylation steps occurring during the Golgi maturation of APP. Inhibits APP transport to the cell surface and further shedding. The sequence is that of Transmembrane protein 59-like (Tmem59l) from Rattus norvegicus (Rat).